A 909-amino-acid polypeptide reads, in one-letter code: Phosphoenolpyruvate carboxylase (909 aa).

Active-site residues include His-138 and Lys-572.

It belongs to the PEPCase type 1 family. It depends on Mg(2+) as a cofactor.

The enzyme catalyses oxaloacetate + phosphate = phosphoenolpyruvate + hydrogencarbonate. In terms of biological role, forms oxaloacetate, a four-carbon dicarboxylic acid source for the tricarboxylic acid cycle. This chain is Phosphoenolpyruvate carboxylase, found in Lactobacillus delbrueckii subsp. bulgaricus (strain ATCC 11842 / DSM 20081 / BCRC 10696 / JCM 1002 / NBRC 13953 / NCIMB 11778 / NCTC 12712 / WDCM 00102 / Lb 14).